The sequence spans 167 residues: Endoribonuclease YbeY (167 aa).

The tract at residues 64–101 (GKPTNVLSWPSEERASEEPGMAPEPPEPGDPEDPEPLG) is disordered. A compositionally biased stretch (acidic residues) spans 90–99 (EPGDPEDPEP). Positions 131, 135, and 141 each coordinate Zn(2+).

The protein belongs to the endoribonuclease YbeY family. Requires Zn(2+) as cofactor.

Its subcellular location is the cytoplasm. Functionally, single strand-specific metallo-endoribonuclease involved in late-stage 70S ribosome quality control and in maturation of the 3' terminus of the 16S rRNA. In Cereibacter sphaeroides (strain ATCC 17023 / DSM 158 / JCM 6121 / CCUG 31486 / LMG 2827 / NBRC 12203 / NCIMB 8253 / ATH 2.4.1.) (Rhodobacter sphaeroides), this protein is Endoribonuclease YbeY.